The primary structure comprises 1159 residues: ABC transporter G family member 24 (1159 aa).

A run of 2 helical transmembrane segments spans residues 11–31 (FNSI…GNNC) and 415–435 (VGSG…FLIF). The 254-residue stretch at 454–707 (LSFHNISCYV…FIKQKIAGMT (254 aa)) folds into the ABC transporter domain. Residue 497-504 (GLSGSGKT) coordinates ATP. The tract at residues 752–846 (QSTSPALSSN…DNNNKNNDDD (95 aa)) is disordered. 2 stretches are compositionally biased toward low complexity: residues 759–768 (SSNSNNSDIN) and 775–784 (INNPHNQNIH). The span at 785–795 (HQQHHHHHRHI) shows a compositional bias: basic residues. The span at 822 to 841 (DNINNNNNNNKVKNNDNNNK) shows a compositional bias: low complexity. Residues 902–1154 (FLLRTTYFVH…LLAYVFLRFL (253 aa)) enclose the ABC transmembrane type-2 domain. The next 6 helical transmembrane spans lie at 909 to 929 (FVHI…PANL), 937 to 957 (FGAM…SLDL), 1005 to 1025 (YMIG…SLVL), 1047 to 1067 (ANMV…FLLA), 1074 to 1094 (YLIG…PVVN), and 1135 to 1155 (VLLG…RFLV).

The protein belongs to the ABC transporter superfamily. ABCG family. Eye pigment precursor importer (TC 3.A.1.204) subfamily.

It localises to the membrane. This chain is ABC transporter G family member 24 (abcG24), found in Dictyostelium discoideum (Social amoeba).